A 315-amino-acid polypeptide reads, in one-letter code: DNA-directed RNA polymerase subunit alpha (315 aa).

The tract at residues 1 to 228 is alpha N-terminal domain (alpha-NTD); sequence MLEIEKPVIQ…EHFKLFMTLT (228 aa). The alpha C-terminal domain (alpha-CTD) stretch occupies residues 245–315; the sequence is KEKALEMTIE…LGLNLRLNDE (71 aa).

This sequence belongs to the RNA polymerase alpha chain family. In terms of assembly, homodimer. The RNAP catalytic core consists of 2 alpha, 1 beta, 1 beta' and 1 omega subunit. When a sigma factor is associated with the core the holoenzyme is formed, which can initiate transcription.

The enzyme catalyses RNA(n) + a ribonucleoside 5'-triphosphate = RNA(n+1) + diphosphate. DNA-dependent RNA polymerase catalyzes the transcription of DNA into RNA using the four ribonucleoside triphosphates as substrates. The protein is DNA-directed RNA polymerase subunit alpha of Clostridium perfringens (strain ATCC 13124 / DSM 756 / JCM 1290 / NCIMB 6125 / NCTC 8237 / Type A).